Consider the following 847-residue polypeptide: Alanine--tRNA ligase (847 aa).

Zn(2+)-binding residues include H554, H558, C656, and H660.

It belongs to the class-II aminoacyl-tRNA synthetase family. Requires Zn(2+) as cofactor.

Its subcellular location is the cytoplasm. It carries out the reaction tRNA(Ala) + L-alanine + ATP = L-alanyl-tRNA(Ala) + AMP + diphosphate. Functionally, catalyzes the attachment of alanine to tRNA(Ala) in a two-step reaction: alanine is first activated by ATP to form Ala-AMP and then transferred to the acceptor end of tRNA(Ala). Also edits incorrectly charged Ser-tRNA(Ala) and Gly-tRNA(Ala) via its editing domain. This is Alanine--tRNA ligase from Helicobacter acinonychis (strain Sheeba).